Consider the following 382-residue polypeptide: Chorismate synthase (382 aa).

NADP(+)-binding residues include R39 and R45. FMN-binding positions include 127 to 129 (RAS), 245 to 246 (QA), G290, 305 to 309 (KPIPT), and R331.

This sequence belongs to the chorismate synthase family. In terms of assembly, homotetramer. FMNH2 is required as a cofactor.

It carries out the reaction 5-O-(1-carboxyvinyl)-3-phosphoshikimate = chorismate + phosphate. It functions in the pathway metabolic intermediate biosynthesis; chorismate biosynthesis; chorismate from D-erythrose 4-phosphate and phosphoenolpyruvate: step 7/7. Functionally, catalyzes the anti-1,4-elimination of the C-3 phosphate and the C-6 proR hydrogen from 5-enolpyruvylshikimate-3-phosphate (EPSP) to yield chorismate, which is the branch point compound that serves as the starting substrate for the three terminal pathways of aromatic amino acid biosynthesis. This reaction introduces a second double bond into the aromatic ring system. The sequence is that of Chorismate synthase from Desulfitobacterium hafniense (strain Y51).